Consider the following 151-residue polypeptide: Transcriptional regulator MraZ (151 aa).

SpoVT-AbrB domains lie at 5 to 52 (ANAV…PLDE) and 81 to 124 (AVDL…DEDA).

This sequence belongs to the MraZ family. As to quaternary structure, forms oligomers.

Its subcellular location is the cytoplasm. It localises to the nucleoid. The protein is Transcriptional regulator MraZ of Pseudomonas putida (strain W619).